A 431-amino-acid chain; its full sequence is Nuclear receptor subfamily 1 group I member 2 (431 aa).

The segment at residues 35–104 is a DNA-binding region (nuclear receptor); sequence LQICRVCGDK…RLRKCLESGM (70 aa). 2 NR C4-type zinc fingers span residues 38 to 58 and 74 to 99; these read CRVC…CEGC and CPFR…LRKC. The Bipartite nuclear localization signal signature appears at 63–89; the sequence is RRAMKRNVRLRCPFRKGTCEITRKTRR. A hinge region spans residues 105–142; sequence KKEMIMSDAAVEQRRALIKRKKREKIEAPPPGGQGLTE. The NR LBD domain maps to 143–430; the sequence is EQQALIQELM…LMQELFSSTD (288 aa). Hyperforin is bound by residues Ser244 and 282–285; that span reads ILRF.

The protein belongs to the nuclear hormone receptor family. NR1 subfamily. As to quaternary structure, heterodimer with RXRA. Interacts with NCOA1. Interacts (via domain NR LBD) with CRY1 and CRY2 in a ligand-dependent manner.

The protein localises to the nucleus. Its function is as follows. Nuclear receptor that binds and is activated by a variety of endogenous and xenobiotic compounds. Transcription factor that activates the transcription of multiple genes involved in the metabolism and secretion of potentially harmful xenobiotics, endogenous compounds and drugs. Response to specific ligands is species-specific, due to differences in the ligand-binding domain. Binds to a response element in the promoters of the CYP3A4 and ABCB1/MDR1 genes. Activated by naturally occurring steroids such as pregnenolone and progesterone, the cholesterol metabolite 5-beta-cholestane-3-alpha,7-alpha,12-alpha-triol, synthetic glucocorticoids and antiglucocorticoids and 16-alpha-carbonitrile (PCN). The protein is Nuclear receptor subfamily 1 group I member 2 (Nr1i2) of Mus musculus (Mouse).